We begin with the raw amino-acid sequence, 1140 residues long: Receptor-type guanylate cyclase gcy-3 (1140 aa).

An N-terminal signal peptide occupies residues 1–21; the sequence is MKNVFQLLIPLFFHLFSLVSL. Residues 22-495 are Extracellular-facing; sequence QNIPVSTGTT…CPLPFWEQYG (474 aa). 7 N-linked (GlcNAc...) asparagine glycosylation sites follow: Asn-220, Asn-301, Asn-349, Asn-385, Asn-418, Asn-441, and Asn-459. Residues 496-516 traverse the membrane as a helical segment; it reads ILIFVGAGVFLIMITTNLICF. The Cytoplasmic portion of the chain corresponds to 517 to 1140; sequence LFMIKNRREE…RQYKMDTLKI (624 aa). Residues 538-826 form the Protein kinase domain; sequence FVKLRELERK…NICEQLRDLM (289 aa). ATP is bound by residues 544–552 and Lys-582; that span reads LERKSKGTS. The 131-residue stretch at 897–1027 folds into the Guanylate cyclase domain; the sequence is TVFFSDVVKF…DTVNTASRME (131 aa). Residues 1083 to 1140 are disordered; that stretch reads PSISNRSTPPVTQERFTVRAPDTPEARSVSSHGSRPSSNHNNNNDPLYRQYKMDTLKI. Residues 1084 to 1097 are compositionally biased toward polar residues; it reads SISNRSTPPVTQER. The segment covering 1109–1126 has biased composition (low complexity); the sequence is RSVSSHGSRPSSNHNNNN.

The protein belongs to the adenylyl cyclase class-4/guanylyl cyclase family. Expressed asymmetrically in ASE right (ASER) sensory neuron and bilaterally in ASI sensory neurons. Expressed in PVT interneuron.

It is found in the cell membrane. It carries out the reaction GTP = 3',5'-cyclic GMP + diphosphate. Its function is as follows. Guanylate cyclase involved in the production of the second messenger cGMP. This chain is Receptor-type guanylate cyclase gcy-3, found in Caenorhabditis elegans.